The following is a 185-amino-acid chain: Peptide deformylase (185 aa).

Positions 109 and 152 each coordinate Fe cation. The active site involves Glu-153. Residue His-156 participates in Fe cation binding.

This sequence belongs to the polypeptide deformylase family. The cofactor is Fe(2+).

It carries out the reaction N-terminal N-formyl-L-methionyl-[peptide] + H2O = N-terminal L-methionyl-[peptide] + formate. Removes the formyl group from the N-terminal Met of newly synthesized proteins. Requires at least a dipeptide for an efficient rate of reaction. N-terminal L-methionine is a prerequisite for activity but the enzyme has broad specificity at other positions. This Roseiflexus sp. (strain RS-1) protein is Peptide deformylase.